The chain runs to 158 residues: Peroxidase (158 aa).

Proline 2 contributes to the substrate binding site. Residue histidine 32 coordinates heme b. Ca(2+) is bound at residue threonine 33. Cysteine 39 and cysteine 64 are disulfide-bonded. A glycan (N-linked (GlcNAc...) asparagine) is linked at asparagine 48. The Ca(2+) site is built by aspartate 78, threonine 81, and aspartate 86.

This sequence belongs to the peroxidase family. Classical plant (class III) peroxidase subfamily. Requires Ca(2+) as cofactor. The cofactor is heme b.

The catalysed reaction is 2 a phenolic donor + H2O2 = 2 a phenolic radical donor + 2 H2O. Functionally, removal of H(2)O(2), oxidation of toxic reductants, biosynthesis and degradation of lignin, suberization, auxin catabolism, response to environmental stresses such as wounding, pathogen attack and oxidative stress. These functions might be dependent on each isozyme/isoform in each plant tissue. The chain is Peroxidase from Lupinus polyphyllus (Large-leaved lupine).